The following is a 214-amino-acid chain: Probable transaldolase (214 aa).

Residue K83 is the Schiff-base intermediate with substrate of the active site.

It belongs to the transaldolase family. Type 3B subfamily.

The protein resides in the cytoplasm. It catalyses the reaction D-sedoheptulose 7-phosphate + D-glyceraldehyde 3-phosphate = D-erythrose 4-phosphate + beta-D-fructose 6-phosphate. The protein operates within carbohydrate degradation; pentose phosphate pathway; D-glyceraldehyde 3-phosphate and beta-D-fructose 6-phosphate from D-ribose 5-phosphate and D-xylulose 5-phosphate (non-oxidative stage): step 2/3. Transaldolase is important for the balance of metabolites in the pentose-phosphate pathway. This is Probable transaldolase from Streptococcus equi subsp. zooepidemicus (strain H70).